The chain runs to 833 residues: Leucine--tRNA ligase (833 aa).

Residues 41–52 (PYPSGAGLHVGH) carry the 'HIGH' region motif. Residues 610-614 (KMSKS) carry the 'KMSKS' region motif. An ATP-binding site is contributed by lysine 613.

The protein belongs to the class-I aminoacyl-tRNA synthetase family.

The protein localises to the cytoplasm. The enzyme catalyses tRNA(Leu) + L-leucine + ATP = L-leucyl-tRNA(Leu) + AMP + diphosphate. The polypeptide is Leucine--tRNA ligase (Streptococcus pyogenes serotype M28 (strain MGAS6180)).